A 322-amino-acid chain; its full sequence is Olfactory receptor 11L1 (322 aa).

The Extracellular segment spans residues 1–25; it reads MEPQNTSTVTNFQLLGFQNLLEWQA. The N-linked (GlcNAc...) asparagine glycan is linked to Asn5. Residues 26-46 traverse the membrane as a helical segment; it reads LLFVIFLLIYCLTIIGNVVII. The Cytoplasmic portion of the chain corresponds to 47 to 54; it reads TVVSQGLR. A helical membrane pass occupies residues 55-75; sequence LHSPMYMFLQHLSFLEVWYTS. Over 76–99 the chain is Extracellular; it reads TTVPLLLANLLSWGQAISFSACMA. Residues Cys97 and Cys189 are joined by a disulfide bond. Residues 100 to 120 form a helical membrane-spanning segment; it reads QLYFFVFLGATECFLLAFMAY. At 121–139 the chain is on the cytoplasmic side; it reads DRYLAICSPLRYPFLMHRG. Residues 140–160 traverse the membrane as a helical segment; the sequence is LCARLVVVSWCTGVSTGFLPS. The Extracellular portion of the chain corresponds to 161–197; it reads LMISRLDFCGRNQINHFFCDLPPLMQLSCSRVYITEV. The helical transmembrane segment at 198–217 threads the bilayer; the sequence is TIFILSIAVLCICFFLTLGP. Residues 218-237 lie on the Cytoplasmic side of the membrane; it reads YVFIVSSILRIPSTSGRRKT. Residues 238–258 traverse the membrane as a helical segment; that stretch reads FSTCGSHLAVVTLYYGTMISM. The Extracellular portion of the chain corresponds to 259 to 271; that stretch reads YVCPSPHLLPEIN. A helical transmembrane segment spans residues 272–292; it reads KIISVFYTVVTPLLNPVIYSL. Over 293 to 322 the chain is Cytoplasmic; sequence RNKDFKEAVRKVMRRKCGILWSTSKRKFLY.

It belongs to the G-protein coupled receptor 1 family.

It localises to the cell membrane. Functionally, odorant receptor. This is Olfactory receptor 11L1 (OR11L1) from Homo sapiens (Human).